We begin with the raw amino-acid sequence, 776 residues long: Calcium-independent phospholipase A2-gamma (776 aa).

2 stretches are compositionally biased toward basic and acidic residues: residues 226–238 (RQLQ…EESK) and 307–331 (LKSD…ICKD). Disordered stretches follow at residues 226–274 (RQLQ…EALP) and 306–331 (KLKS…ICKD). The 196-residue stretch at 439–634 (LAIDGGGTRG…LLNNPSALAL (196 aa)) folds into the PNPLA domain. A GXGXXG motif is present at residues 443 to 448 (GGGTRG). The chain crosses the membrane as a helical span at residues 469-489 (LFDYICGVSTGAILAFMLGLF). The GXSXG signature appears at 475 to 479 (GVSTG). S477 serves as the catalytic Nucleophile. D621 (proton acceptor) is an active-site residue. The short motif at 621–623 (DGG) is the DGA/G element. K730 carries the post-translational modification N6-succinyllysine.

The protein localises to the endoplasmic reticulum membrane. It localises to the microsome membrane. The protein resides in the mitochondrion membrane. It is found in the peroxisome membrane. The enzyme catalyses a 1,2-diacyl-sn-glycero-3-phosphocholine + H2O = a 1-acyl-sn-glycero-3-phosphocholine + a fatty acid + H(+). It carries out the reaction a 1,2-diacyl-sn-glycero-3-phosphocholine + H2O = a 2-acyl-sn-glycero-3-phosphocholine + a fatty acid + H(+). It catalyses the reaction a 1,2-diacyl-sn-glycero-3-phosphoethanolamine + H2O = a 1-acyl-sn-glycero-3-phosphoethanolamine + a fatty acid + H(+). The catalysed reaction is a 1-O-(1Z-alkenyl)-2-acyl-sn-glycero-3-phosphocholine + H2O = a 1-O-(1Z-alkenyl)-sn-glycero-3-phosphocholine + a fatty acid + H(+). The enzyme catalyses a 1-acyl-sn-glycero-3-phosphocholine + H2O = sn-glycerol 3-phosphocholine + a fatty acid + H(+). It carries out the reaction 1-acyl-2-(9Z,12Z)-octadecadienoyl-sn-glycero-3-phosphocholine + H2O = a 1-acyl-sn-glycero-3-phosphocholine + (9Z,12Z)-octadecadienoate + H(+). It catalyses the reaction 1-acyl-2-(5Z,8Z,11Z,14Z-eicosatetraenoyl)-sn-glycero-3-phosphocholine + H2O = a 1-acyl-sn-glycero-3-phosphocholine + (5Z,8Z,11Z,14Z)-eicosatetraenoate + H(+). The catalysed reaction is 1-hexadecanoyl-2-(5Z,8Z,11Z,14Z-eicosatetraenoyl)-sn-glycero-3-phosphocholine + H2O = 1-hexadecanoyl-sn-glycero-3-phosphocholine + (5Z,8Z,11Z,14Z)-eicosatetraenoate + H(+). The enzyme catalyses 1-octadecanoyl-2-(9Z-octadecenoyl)-sn-glycero-3-phosphocholine + H2O = 1-octadecanoyl-sn-glycero-3-phosphocholine + (9Z)-octadecenoate + H(+). It carries out the reaction 1-hexadecanoyl-2-(9Z-octadecenoyl)-sn-glycero-3-phosphocholine + H2O = 1-hexadecanoyl-sn-glycero-3-phosphocholine + (9Z)-octadecenoate + H(+). It catalyses the reaction 1-hexadecanoyl-2-(9Z,12Z-octadecadienoyl)-sn-glycero-3-phosphocholine + H2O = (9Z,12Z)-octadecadienoate + 1-hexadecanoyl-sn-glycero-3-phosphocholine + H(+). The catalysed reaction is 1-acyl-2-(9Z,12Z)-octadecadienoyl-sn-glycero-3-phosphoethanolamine + H2O = a 1-acyl-sn-glycero-3-phosphoethanolamine + (9Z,12Z)-octadecadienoate + H(+). The enzyme catalyses 1-acyl-2-(5Z,8Z,11Z,14Z)-eicosatetraenoyl-sn-glycero-3-phosphoethanolamine + H2O = a 1-acyl-sn-glycero-3-phosphoethanolamine + (5Z,8Z,11Z,14Z)-eicosatetraenoate + H(+). It carries out the reaction 1-hexadecanoyl-2-(5Z,8Z,11Z,14Z-eicosatetraenoyl)-sn-glycero-3-phosphoethanolamine + H2O = 1-hexadecanoyl-sn-glycero-3-phosphoethanolamine + (5Z,8Z,11Z,14Z)-eicosatetraenoate + H(+). It catalyses the reaction 1-hexadecanoyl-2-(5Z,8Z,11Z,14Z-eicosatetraenoyl)-sn-glycero-3-phosphocholine + H2O = 2-(5Z,8Z,11Z,14Z)-eicosatetraenoyl-sn-glycero-3-phosphocholine + hexadecanoate + H(+). The catalysed reaction is 1-octadecanoyl-2-(9Z-octadecenoyl)-sn-glycero-3-phosphocholine + H2O = 2-(9Z-octadecenoyl)-sn-glycero-3-phosphocholine + octadecanoate + H(+). The enzyme catalyses 1-hexadecanoyl-2-(4Z,7Z,10Z,13Z,16Z,19Z-docosahexaenoyl)-sn-glycero-3-phosphocholine + H2O = 2-(4Z,7Z,10Z,13Z,16Z,19Z-docosahexaenoyl)-sn-glycero-3-phosphocholine + hexadecanoate + H(+). It carries out the reaction 1-O-(1Z)-hexadecenyl-2 (5Z,8Z,11Z,14Z)-eicosatetraenoyl-sn-glycero-3-phosphocholine + H2O = 1-(1Z-hexadecenyl)-sn-glycero-3-phosphocholine + (5Z,8Z,11Z,14Z)-eicosatetraenoate + H(+). It catalyses the reaction 1-O-(1Z-hexadecenyl)-2-(9Z-octadecenoyl)-sn-glycero-3-phosphocholine + H2O = 1-(1Z-hexadecenyl)-sn-glycero-3-phosphocholine + (9Z)-octadecenoate + H(+). The catalysed reaction is 1-hexadecanoyl-sn-glycero-3-phosphocholine + H2O = sn-glycerol 3-phosphocholine + hexadecanoate + H(+). The enzyme catalyses 1',3'-bis-[1,2-di-(9Z,12Z-octadecadienoyl)-sn-glycero-3-phospho]-glycerol + H2O = 1'-[1,2-di-(9Z,12Z-octadecadienoyl)-sn-glycero-3-phospho]-3'-[1-(9Z,12Z-octadecadienoyl)-sn-glycero-3-phospho]-glycerol + (9Z,12Z)-octadecadienoate + H(+). It carries out the reaction 1'-[1-acyl-2-(9-hydroxy-(10E,12Z)-octadecadienoyl)-sn-glycero-3-phospho]-3'-[1,2-diacyl-sn-glycero-3-phospho]-glycerol + H2O = 9-hydroxy-(10E,12Z)-octadecadienoate + 1'-[1,2-diacyl-sn-glycero-3-phospho],3'-[1-acyl-sn-glycero-3-phospho]-glycerol + H(+). The protein operates within phospholipid metabolism. Calcium-independent phospholipase. Functionally, calcium-independent and membrane-bound phospholipase, that catalyzes the esterolytic cleavage of fatty acids from glycerophospholipids to yield free fatty acids and lysophospholipids, hence regulating membrane physical properties and the release of lipid second messengers and growth factors. Hydrolyzes phosphatidylethanolamine, phosphatidylcholine and probably phosphatidylinositol with a possible preference for the former. Has also a broad substrate specificity in terms of fatty acid moieties, hydrolyzing saturated and mono-unsaturated fatty acids at nearly equal rates from either the sn-1 or sn-2 position in diacyl phosphatidylcholine. However, has a weak activity toward polyunsaturated fatty acids at the sn-2 position, and thereby favors the production of 2-arachidonoyl lysophosphatidylcholine, a key branch point metabolite in eicosanoid signaling. On the other hand, can produce arachidonic acid from the sn-1 position of diacyl phospholipid and from the sn-2 position of arachidonate-containing plasmalogen substrates. Therefore, plays an important role in the mobilization of arachidonic acid in response to cellular stimuli and the generation of lipid second messengers. Can also hydrolyze lysophosphatidylcholine. In the mitochondrial compartment, catalyzes the hydrolysis and release of oxidized aliphatic chains from cardiolipin and integrates mitochondrial bioenergetics and signaling. It is essential for maintaining efficient bioenergetic mitochondrial function through tailoring mitochondrial membrane lipid metabolism and composition. The polypeptide is Calcium-independent phospholipase A2-gamma (Rattus norvegicus (Rat)).